A 419-amino-acid polypeptide reads, in one-letter code: Multifunctional CCA protein (419 aa).

ATP-binding residues include Gly8 and Arg11. Gly8 and Arg11 together coordinate CTP. Residues Asp21 and Asp23 each contribute to the Mg(2+) site. The ATP site is built by Arg91, Arg137, and Arg140. CTP contacts are provided by Arg91, Arg137, and Arg140. Positions 226-327 constitute an HD domain; sequence TGVHLMMVLD…VRLFDRCDAW (102 aa).

The protein belongs to the tRNA nucleotidyltransferase/poly(A) polymerase family. Bacterial CCA-adding enzyme type 1 subfamily. As to quaternary structure, monomer. Can also form homodimers and oligomers. It depends on Mg(2+) as a cofactor. Ni(2+) is required as a cofactor.

It catalyses the reaction a tRNA precursor + 2 CTP + ATP = a tRNA with a 3' CCA end + 3 diphosphate. The enzyme catalyses a tRNA with a 3' CCA end + 2 CTP + ATP = a tRNA with a 3' CCACCA end + 3 diphosphate. In terms of biological role, catalyzes the addition and repair of the essential 3'-terminal CCA sequence in tRNAs without using a nucleic acid template. Adds these three nucleotides in the order of C, C, and A to the tRNA nucleotide-73, using CTP and ATP as substrates and producing inorganic pyrophosphate. tRNA 3'-terminal CCA addition is required both for tRNA processing and repair. Also involved in tRNA surveillance by mediating tandem CCA addition to generate a CCACCA at the 3' terminus of unstable tRNAs. While stable tRNAs receive only 3'-terminal CCA, unstable tRNAs are marked with CCACCA and rapidly degraded. This is Multifunctional CCA protein from Leptothrix cholodnii (strain ATCC 51168 / LMG 8142 / SP-6) (Leptothrix discophora (strain SP-6)).